The following is a 203-amino-acid chain: bMERB domain-containing protein 1 (203 aa).

The bMERB domain maps to 3–149; it reads LKQSLSVHLE…EQEEDKEMAD (147 aa). The segment at 161–184 is disordered; the sequence is VTKTSASSRAEKKAEPPPSKPTVA.

This Mus musculus (Mouse) protein is bMERB domain-containing protein 1 (Bmerb1).